A 591-amino-acid chain; its full sequence is MKYILVTGGVISGIGKGIIASSVGTILKSCGLHVTAIKIDPYINIDAGTFSPYEHGEVFVLDDGGEVDLDLGNYERFLDIRLTKDNNLTTGKIYQSVINKERRGDYLGKTVQVVPHITDAIQEWVMRQAKIPVDDDDVEPQVCVIELGGTVGDIESMPFVEAFRQFQFKVKRENFCNIHVSLVPQPSATGEQKTKPTQNSVRELRGLGLSPDLIMCRCSTPLDNSVKEKISMFCHVEPEQVICVHDVSSIYRVPLLLEDQGVVGYFCRRLNLPIENRPRKMLAKWKEMSDRSDRLLEQCSIALVGKYTKFSDSYASVIKALEHSALAISHKLEVKYVDSADLEPSMLQEEPVKYHEAWQKLCSSDGILVPGGFGVRGTEGKIQAINWARKQKKPFLGVCLGMQLAVCEFARNMLDWTDANSTEFDPETKHPVVIDMPEHNPGQMGGTMRLGKRRTIFKNKSSILRKLYGDVDYVEERHRHRFEVNPELKHHFEEKGFRFVGQDVEGERMEVIEMDDHPYFVGVQYHPEFTSRPIKPSPPYLGLLLAAAGRLQSYLQKGCRLSPRDAYSDRSGSSSPDLEIADLKLRSIAQE.

Residues 300–554 (SIALVGKYTK…LAAAGRLQSY (255 aa)) enclose the Glutamine amidotransferase type-1 domain. Active-site for GATase activity residues include Cys-399, His-526, and Glu-528. Phosphoserine is present on residues Ser-571 and Ser-575.

It belongs to the CTP synthase family.

It carries out the reaction UTP + L-glutamine + ATP + H2O = CTP + L-glutamate + ADP + phosphate + 2 H(+). It functions in the pathway pyrimidine metabolism; CTP biosynthesis via de novo pathway; CTP from UDP: step 2/2. Its function is as follows. This enzyme is involved in the de novo synthesis of CTP, a precursor of DNA, RNA and phospholipids. Catalyzes the ATP-dependent amination of UTP to CTP with either L-glutamine or ammonia as a source of nitrogen. The sequence is that of CTP synthase 1 (ctps1) from Danio rerio (Zebrafish).